The sequence spans 550 residues: Probable terpene synthase 2 (550 aa).

Asp305, Asp309, and Glu457 together coordinate Mg(2+). The short motif at 305 to 309 (DDIYD) is the DDXXD motif element.

The protein belongs to the terpene synthase family. The cofactor is Mg(2+).

Its function is as follows. Probable sesquiterpene synthase. The protein is Probable terpene synthase 2 (TPS2) of Ricinus communis (Castor bean).